The sequence spans 1020 residues: LLGL scribble cell polarity complex component 2 (1020 aa).

WD repeat units lie at residues 36–69 (SALGYSPSLRILAIGTRSGAIKLYGAPGVEFMGL), 76–117 (VTQI…DESF), 132–169 (ITVVLPHSSCELLYLGTESGNVFVVQLPAFRALEDRTI), 193–227 (ALQEHPRDPNQILIGYSRGLVVIWDLQGSRVLYHF), 233–268 (LENIWWQRDGRLLVSCHSDGSYCQWPVSSEAQQPEP), 282–324 (AITR…GQQT), 332–366 (VIGFTVLTEADPAATFDDPYALVVLAEEELVVIDL), 388–464 (TCSH…YKLS), 508–583 (QKIF…FVLV), 592–653 (TSLA…LRQS), 713–769 (VRTL…KEIQ), 778–830 (GILV…VSAK), 835–888 (LTAL…VRYS), and 902–925 (VFTKYGQGFYLISPSEFERFSLST). Ser-653 carries the post-translational modification Phosphoserine. Basic residues predominate over residues 653–669 (SFRRMRRSRVSSRKRHP). Residues 653–689 (SFRRMRRSRVSSRKRHPAGPPGEAQEGSAKAERPGLQ) are disordered. Disordered stretches follow at residues 938 to 975 (AETKNHRPGNGAGPKKAPSRARNSGTQSDGEEKQPGLV) and 992 to 1020 (STLEGDRGSGNWRSHRAAVGCSLSNGGAE). Phosphoserine occurs at positions 965 and 1015.

It belongs to the WD repeat L(2)GL family. As to quaternary structure, interacts with GPSM2/LGN, PRKCI/aPKC and PARD6B/Par-6. The complex is enhanced during mitosis. Interacts with DCAF1. Post-translationally, phosphorylated at Ser-653 by PRKCI. Phosphorylation is enhanced during cell polarization induced by calcium. Phosphorylation may occur during the cell-cell contact-induced cell polarization and may contribute to the segregation of LLGL2 from the PRKCI/aPKC and PARD6B/Par-6 complex.

The protein localises to the cytoplasm. In terms of biological role, part of a complex with GPSM2/LGN, PRKCI/aPKC and PARD6B/Par-6, which may ensure the correct organization and orientation of bipolar spindles for normal cell division. This complex plays roles in the initial phase of the establishment of epithelial cell polarity. In Homo sapiens (Human), this protein is LLGL scribble cell polarity complex component 2 (LLGL2).